Reading from the N-terminus, the 4318-residue chain is Cytoplasmic dynein 2 heavy chain 1 (4318 aa).

A stem region spans residues 1-1658; sequence MPAEDARKEY…IMRMVDAEFQ (1658 aa). Residue 147–154 coordinates ATP; sequence LKSLVRKQ. 2 coiled-coil regions span residues 1328–1354 and 1402–1431; these read DKAT…QRKW and LRTT…RSIL. AAA regions lie at residues 1659–1883, 1951–2171, 2261–2515, and 2623–2871; these read YTYE…VLRG, DAIR…RQGD, ASDF…WVLG, and TFAR…SSSV. 1697–1704 is an ATP binding site; the sequence is GPAGTGKT. Positions 1959-1986 form a coiled coil; the sequence is EHNLVVMETQVKKALELYEQLRQRMGVV. ATP contacts are provided by residues 1989 to 1996, 2301 to 2308, and 2661 to 2668; these read GPSGSGKS, GPDGCGKG, and GRSGVGRR. Residues 2888-3176 are stalk; that stretch reads DVYRRKKQGV…YELEKEQETI (289 aa). 2 coiled-coil regions span residues 2908–2989 and 3423–3480; these read VAKL…AEIE and QHEK…KTKE. AAA stretches follow at residues 3251–3487 and 3699–3914; these read LSTE…TITQ and MTFF…IIDR.

The protein belongs to the dynein heavy chain family. The cytoplasmic dynein complex 2 is probably composed by a heavy chain DYH1B homodimer and a number of light intermediate chains.

The protein resides in the cytoplasm. It localises to the cytoskeleton. The protein localises to the cilium axoneme. Its subcellular location is the cell membrane. Functionally, may function as a motor for intraflagellar retrograde transport. Functions in cilia biogenesis. The sequence is that of Cytoplasmic dynein 2 heavy chain 1 (DYH1B) from Tripneustes gratilla (Hawaian sea urchin).